Reading from the N-terminus, the 201-residue chain is Recombination protein RecR (201 aa).

Residues 60-75 form a C4-type zinc finger; the sequence is CSVCGNVDTSDPCTIC. A Toprim domain is found at 83-178; it reads ATLIVVEDVS…RVTKLAHGVP (96 aa).

This sequence belongs to the RecR family.

Functionally, may play a role in DNA repair. It seems to be involved in an RecBC-independent recombinational process of DNA repair. It may act with RecF and RecO. The protein is Recombination protein RecR of Chelativorans sp. (strain BNC1).